We begin with the raw amino-acid sequence, 351 residues long: Translation initiation factor eIF2B subunit beta (351 aa).

The protein belongs to the eIF-2B alpha/beta/delta subunits family. Component of the translation initiation factor 2B (eIF2B) complex which is a heterodecamer of two sets of five different subunits: alpha, beta, gamma, delta and epsilon. Subunits alpha, beta and delta comprise a regulatory subcomplex and subunits epsilon and gamma comprise a catalytic subcomplex. Within the complex, the hexameric regulatory complex resides at the center, with the two heterodimeric catalytic subcomplexes bound on opposite sides.

It localises to the cytoplasm. Its subcellular location is the cytosol. Its activity is regulated as follows. Activated by the chemical integrated stress response (ISR) inhibitor ISRIB which stimulates guanine nucleotide exchange factor activity for both phosphorylated and unphosphorylated eIF2. Acts as a component of the translation initiation factor 2B (eIF2B) complex, which catalyzes the exchange of GDP for GTP on eukaryotic initiation factor 2 (eIF2) gamma subunit. Its guanine nucleotide exchange factor activity is repressed when bound to eIF2 complex phosphorylated on the alpha subunit, thereby limiting the amount of methionyl-initiator methionine tRNA available to the ribosome and consequently global translation is repressed. The protein is Translation initiation factor eIF2B subunit beta (EIF2B2) of Homo sapiens (Human).